Consider the following 436-residue polypeptide: 3-ketoacyl-CoA thiolase (436 aa).

The active-site Acyl-thioester intermediate is the C99. Residues H392 and C422 each act as proton acceptor in the active site.

It belongs to the thiolase-like superfamily. Thiolase family. In terms of assembly, heterotetramer of two alpha chains (FadJ) and two beta chains (FadI).

The protein resides in the cytoplasm. It carries out the reaction an acyl-CoA + acetyl-CoA = a 3-oxoacyl-CoA + CoA. It functions in the pathway lipid metabolism; fatty acid beta-oxidation. Functionally, catalyzes the final step of fatty acid oxidation in which acetyl-CoA is released and the CoA ester of a fatty acid two carbons shorter is formed. The sequence is that of 3-ketoacyl-CoA thiolase from Escherichia coli (strain SMS-3-5 / SECEC).